The sequence spans 141 residues: Hemoglobin subunit alpha-A (141 aa).

The Globin domain maps to 1–141 (VLSSHDKSNV…VGTVLTAKYR (141 aa)). H58 is a binding site for O2. A heme b-binding site is contributed by H87.

It belongs to the globin family. In terms of assembly, heterotetramer of two alpha chains and two beta chains. As to expression, red blood cells.

In terms of biological role, involved in oxygen transport from the lung to the various peripheral tissues. This chain is Hemoglobin subunit alpha-A (HBAA), found in Phoenicopterus ruber (American flamingo).